A 351-amino-acid polypeptide reads, in one-letter code: Polycomb group RING finger protein 6 (351 aa).

The interval 1 to 114 (MEEAETDATE…FSLRLESGRA (114 aa)) is disordered. Residues 9–19 (TENKRASEAKR) are compositionally biased toward basic and acidic residues. The segment covering 24 to 37 (LPPPPPPISPPALI) has biased composition (pro residues). Residue Ser32 is modified to Phosphoserine. Positions 38-51 (PAPAAGEEGPASLA) are enriched in low complexity. Residues 62–80 (RPPELEPERSLGRLRGRFE) are compositionally biased toward basic and acidic residues. A coiled-coil region spans residues 69 to 110 (ERSLGRLRGRFEDYDEELEEDEEMEEEEEEEEEMSHFSLRLE). Over residues 81–101 (DYDEELEEDEEMEEEEEEEEE) the composition is skewed to acidic residues. Phosphoserine is present on Ser116. The segment at 135–174 (CSICKGYLIDATTITECLHTFCKSCIVRHFYYSNRCPKCN) adopts an RING-type zinc-finger fold. Residues Lys224 and Lys235 each participate in a glycyl lysine isopeptide (Lys-Gly) (interchain with G-Cter in SUMO2) cross-link.

In terms of assembly, component of a PRC1-like complex. Interacts with BMI1/PCGF4, RING1 and RNF2. Interacts with KDM5D. Interacts with CBX4, CBX6, CBX7 and CBX8. Phosphorylated during mitosis.

It localises to the nucleus. Transcriptional repressor. May modulate the levels of histone H3K4Me3 by activating KDM5D histone demethylase. Component of a Polycomb group (PcG) multiprotein PRC1-like complex, a complex class required to maintain the transcriptionally repressive state of many genes, including Hox genes, throughout development. PcG PRC1 complex acts via chromatin remodeling and modification of histones; it mediates monoubiquitination of histone H2A 'Lys-119', rendering chromatin heritably changed in its expressibility. Within the PRC1-like complex, regulates RNF2 ubiquitin ligase activity. This chain is Polycomb group RING finger protein 6 (Pcgf6), found in Rattus norvegicus (Rat).